A 93-amino-acid polypeptide reads, in one-letter code: Small ribosomal subunit protein uS17 (93 aa).

The protein belongs to the universal ribosomal protein uS17 family. In terms of assembly, part of the 30S ribosomal subunit.

One of the primary rRNA binding proteins, it binds specifically to the 5'-end of 16S ribosomal RNA. The polypeptide is Small ribosomal subunit protein uS17 (Bordetella bronchiseptica (strain ATCC BAA-588 / NCTC 13252 / RB50) (Alcaligenes bronchisepticus)).